The primary structure comprises 257 residues: NAD-capped RNA hydrolase NudC (257 aa).

Arginine 69 is a substrate binding site. The Zn(2+) site is built by cysteine 98 and cysteine 101. Glutamate 111 contacts substrate. Zn(2+) contacts are provided by cysteine 116 and cysteine 119. A substrate-binding site is contributed by tyrosine 124. The Nudix hydrolase domain occupies 125 to 248; that stretch reads PQIAPCIIVA…TVARRLIEDT (124 aa). 3 residues coordinate a divalent metal cation: alanine 158, glutamate 174, and glutamate 178. Positions 159–180 match the Nudix box motif; the sequence is GFVEVGETLEQAAAREIFEESR. 192 to 199 contacts substrate; sequence QPWPFPHS. Residue glutamate 219 participates in a divalent metal cation binding. Residue alanine 241 coordinates substrate.

This sequence belongs to the Nudix hydrolase family. NudC subfamily. In terms of assembly, homodimer. The cofactor is Mg(2+). Mn(2+) serves as cofactor. It depends on Zn(2+) as a cofactor.

The enzyme catalyses a 5'-end NAD(+)-phospho-ribonucleoside in mRNA + H2O = a 5'-end phospho-adenosine-phospho-ribonucleoside in mRNA + beta-nicotinamide D-ribonucleotide + 2 H(+). It catalyses the reaction NAD(+) + H2O = beta-nicotinamide D-ribonucleotide + AMP + 2 H(+). It carries out the reaction NADH + H2O = reduced beta-nicotinamide D-ribonucleotide + AMP + 2 H(+). Its function is as follows. mRNA decapping enzyme that specifically removes the nicotinamide adenine dinucleotide (NAD) cap from a subset of mRNAs by hydrolyzing the diphosphate linkage to produce nicotinamide mononucleotide (NMN) and 5' monophosphate mRNA. The NAD-cap is present at the 5'-end of some mRNAs and stabilizes RNA against 5'-processing. Has preference for mRNAs with a 5'-end purine. Catalyzes the hydrolysis of a broad range of dinucleotide pyrophosphates. The chain is NAD-capped RNA hydrolase NudC from Edwardsiella ictaluri (strain 93-146).